Here is a 328-residue protein sequence, read N- to C-terminus: Aryl-hydrocarbon-interacting protein-like 1 (328 aa).

Positions 53–145 constitute a PPIase FKBP-type domain; sequence KQVGHPMHII…DLDELQKEPQ (93 aa). TPR repeat units follow at residues 178–211, 230–263, and 264–297; these read VPILHGEGNRLFKLGRYEEASNKYQEAIVCLRNL, NTLILNYCQCLLKKEEYYEVLEHTSDILRHHPGI, and VKAYYVRARAHAEVWNEAEAKADLEKVLELEPSM.

In terms of assembly, directly interacts with NUB1.

The protein localises to the cytoplasm. It localises to the nucleus. Its function is as follows. May be important in protein trafficking and/or protein folding and stabilization. The chain is Aryl-hydrocarbon-interacting protein-like 1 (AIPL1) from Bos taurus (Bovine).